The primary structure comprises 257 residues: Type III pantothenate kinase (257 aa).

Position 6–13 (6–13 (DCGNTNTV)) interacts with ATP. 107-110 (GPDR) is a substrate binding site. The active-site Proton acceptor is aspartate 109. Residue aspartate 129 coordinates K(+). Threonine 132 lines the ATP pocket. Threonine 184 is a substrate binding site.

This sequence belongs to the type III pantothenate kinase family. As to quaternary structure, homodimer. NH4(+) is required as a cofactor. K(+) serves as cofactor.

It localises to the cytoplasm. The catalysed reaction is (R)-pantothenate + ATP = (R)-4'-phosphopantothenate + ADP + H(+). Its pathway is cofactor biosynthesis; coenzyme A biosynthesis; CoA from (R)-pantothenate: step 1/5. In terms of biological role, catalyzes the phosphorylation of pantothenate (Pan), the first step in CoA biosynthesis. The polypeptide is Type III pantothenate kinase (Cereibacter sphaeroides (strain ATCC 17025 / ATH 2.4.3) (Rhodobacter sphaeroides)).